Reading from the N-terminus, the 138-residue chain is Large ribosomal subunit protein uL14 (138 aa).

Belongs to the universal ribosomal protein uL14 family. In terms of assembly, part of the 50S ribosomal subunit. Forms a cluster with proteins L3 and L24e, part of which may contact the 16S rRNA in 2 intersubunit bridges.

Functionally, binds to 23S rRNA. Forms part of two intersubunit bridges in the 70S ribosome. This chain is Large ribosomal subunit protein uL14, found in Sulfurisphaera tokodaii (strain DSM 16993 / JCM 10545 / NBRC 100140 / 7) (Sulfolobus tokodaii).